The chain runs to 275 residues: tRNA pseudouridine synthase B (275 aa).

Aspartate 38 functions as the Nucleophile in the catalytic mechanism.

The protein belongs to the pseudouridine synthase TruB family. Type 1 subfamily.

The catalysed reaction is uridine(55) in tRNA = pseudouridine(55) in tRNA. Its function is as follows. Responsible for synthesis of pseudouridine from uracil-55 in the psi GC loop of transfer RNAs. This is tRNA pseudouridine synthase B from Nitratiruptor sp. (strain SB155-2).